We begin with the raw amino-acid sequence, 340 residues long: Phosphate acyltransferase (340 aa).

It belongs to the PlsX family. As to quaternary structure, homodimer. Probably interacts with PlsY.

The protein localises to the cytoplasm. The enzyme catalyses a fatty acyl-[ACP] + phosphate = an acyl phosphate + holo-[ACP]. The protein operates within lipid metabolism; phospholipid metabolism. In terms of biological role, catalyzes the reversible formation of acyl-phosphate (acyl-PO(4)) from acyl-[acyl-carrier-protein] (acyl-ACP). This enzyme utilizes acyl-ACP as fatty acyl donor, but not acyl-CoA. This Clostridioides difficile (strain 630) (Peptoclostridium difficile) protein is Phosphate acyltransferase.